The chain runs to 391 residues: Oxytocin receptor (391 aa).

Over methionine 1 to leucine 38 the chain is Extracellular. 3 N-linked (GlcNAc...) asparagine glycosylation sites follow: asparagine 8, asparagine 15, and asparagine 26. A helical membrane pass occupies residues alanine 39–alanine 63. Residues leucine 64 to leucine 74 lie on the Cytoplasmic side of the membrane. Residues phenylalanine 75–leucine 97 form a helical membrane-spanning segment. Topologically, residues leucine 98 to arginine 113 are extracellular. A disulfide bridge links cysteine 112 with cysteine 187. A helical membrane pass occupies residues leucine 114 to leucine 135. Topologically, residues aspartate 136–arginine 154 are cytoplasmic. The helical transmembrane segment at leucine 155–phenylalanine 175 threads the bilayer. Residues serine 176–threonine 202 lie on the Extracellular side of the membrane. Residues tryptophan 203–phenylalanine 225 form a helical membrane-spanning segment. The Cytoplasmic portion of the chain corresponds to lysine 226–lysine 277. Residues methionine 278–valine 296 traverse the membrane as a helical segment. Residues glutamine 297–serine 311 are Extracellular-facing. The helical transmembrane segment at proline 312 to phenylalanine 334 threads the bilayer. The Cytoplasmic segment spans residues threonine 335–leucine 391. 2 positions are modified to phosphoserine: serine 368 and serine 370.

This sequence belongs to the G-protein coupled receptor 1 family. Vasopressin/oxytocin receptor subfamily.

It is found in the cell membrane. Its function is as follows. Receptor for oxytocin. The activity of this receptor is mediated by G proteins which activate a phosphatidylinositol-calcium second messenger system. The chain is Oxytocin receptor (OXTR) from Bos taurus (Bovine).